The primary structure comprises 357 residues: Cobalt-precorrin-5B C(1)-methyltransferase (357 aa).

Belongs to the CbiD family.

It catalyses the reaction Co-precorrin-5B + S-adenosyl-L-methionine = Co-precorrin-6A + S-adenosyl-L-homocysteine. The protein operates within cofactor biosynthesis; adenosylcobalamin biosynthesis; cob(II)yrinate a,c-diamide from sirohydrochlorin (anaerobic route): step 6/10. Functionally, catalyzes the methylation of C-1 in cobalt-precorrin-5B to form cobalt-precorrin-6A. In Paramagnetospirillum magneticum (strain ATCC 700264 / AMB-1) (Magnetospirillum magneticum), this protein is Cobalt-precorrin-5B C(1)-methyltransferase.